We begin with the raw amino-acid sequence, 1149 residues long: Eukaryotic translation initiation factor 3 subunit A (1149 aa).

Residues 317–498 form the PCI domain; that stretch reads IQRMTSHVLI…HSVHFGTDLS (182 aa). Disordered stretches follow at residues 496 to 515 and 811 to 1149; these read DLSESQREDHPDGPTLQSMP and EEER…KHHR. Residues 811-885 show a composition bias toward basic and acidic residues; sequence EEERRRIEEE…APRGEKEERG (75 aa). Positions 886 to 895 are enriched in gly residues; the sequence is GGGGGGGAWR. Positions 908–924 are enriched in basic and acidic residues; that stretch reads AKPESDWRNAREAREPA. The segment covering 925-937 has biased composition (low complexity); the sequence is PESAGASSAAAPA. Composition is skewed to basic and acidic residues over residues 961-970, 1005-1095, and 1113-1132; these read RPPRGDDREP, GPMR…DRRG, and EPAKPREERRGGEERPKEAR.

This sequence belongs to the eIF-3 subunit A family. In terms of assembly, component of the eukaryotic translation initiation factor 3 (eIF-3) complex.

It is found in the cytoplasm. Functionally, RNA-binding component of the eukaryotic translation initiation factor 3 (eIF-3) complex, which is involved in protein synthesis of a specialized repertoire of mRNAs and, together with other initiation factors, stimulates binding of mRNA and methionyl-tRNAi to the 40S ribosome. The eIF-3 complex specifically targets and initiates translation of a subset of mRNAs involved in cell proliferation. The protein is Eukaryotic translation initiation factor 3 subunit A of Culex quinquefasciatus (Southern house mosquito).